Consider the following 428-residue polypeptide: Dihydroorotase (428 aa).

Zn(2+)-binding residues include His-59 and His-61. Substrate is bound by residues 61–63 (HLR) and Asn-93. Positions 151, 178, and 231 each coordinate Zn(2+). Residue Asn-277 coordinates substrate. Asp-304 lines the Zn(2+) pocket. Asp-304 is a catalytic residue. Residues His-308 and 322 to 323 (FG) each bind substrate.

The protein belongs to the metallo-dependent hydrolases superfamily. DHOase family. Class I DHOase subfamily. Zn(2+) serves as cofactor.

The catalysed reaction is (S)-dihydroorotate + H2O = N-carbamoyl-L-aspartate + H(+). It functions in the pathway pyrimidine metabolism; UMP biosynthesis via de novo pathway; (S)-dihydroorotate from bicarbonate: step 3/3. Functionally, catalyzes the reversible cyclization of carbamoyl aspartate to dihydroorotate. The chain is Dihydroorotase from Bacillus cytotoxicus (strain DSM 22905 / CIP 110041 / 391-98 / NVH 391-98).